A 1000-amino-acid chain; its full sequence is MSSGNPFDNGNPNDGNKSPSIDELYSPSESLARDGDDNNNNNNNNNNNNNNNNNNNNSSVSEKKKSKKKVRIQEEERLTESYDDDGDDEERRAYIENEEGEEEETEDGIILQPIVRDHSTYRPKNLYGSSDDIREGDSFGAKVSKTFGKTNKKIKQKIGESNKKIETRVKHSNKAIEEGWKTIAQTTMKPVDNIREQHHRRAEQHEVAERAVWFKDKLQIQKYECLDYVTIYNKAHRNELYKNFSKLASDHEVLRWIVSLFMGIFIGVIAYFSHACVSNITKYKFKFVEAVLELDLFLAFLTYFLLNTLLATCSSLLAVYYEPTAAGSGIPEVKGYLNGTKIPHTLKMKTLWTKFLSMVLAVSSGLQAGSEGPMIHIGAIVGNGFSQAQSKEFGFKIPFLRSFRNDKDKRDFVTSGAGAGVAAAFSAPLGGTLFSLEEVSSFWSIALTWRAFFCCMVATYTMNVLQSNSGSLTGLIIFNTGIGDKESYNWFEIIPFLLIGVLGGLGGALFTWINVKVTEFRREKINKIKSLRVLEVFLIIGLSTCIQFFLPLFFSCQNTAPFIPSVGNSTLTDVTLTNGAFYNSTIINGTFYNSTIANGTIYNSKFYNSSIYNSTITNGTGVSYDPAETLKELSEFKRFNCKEGWYNPMATLIFASYEESITNLLKVNSNNVTNTERLGLWPMFLFCIFYLFFAAYTAGCAVATGTLVPMLVIGASYGRFVGLVVYHILGDKVSIDPGIYAVMGAAAFMGGVSRLTISLTVILIEITDRLKYLLPLMLTVMTAKWVADALIHPLFDLLMQMKYIPYLELDQSKEMKLMMCKHIMAKKPVYLAEKDTLGNLRVLKETRHNGFPVVNNDEEKLVKGLILRTQLLMILERISDVYIPNSEAIYSHIEYTTKLTWKLPSVNDFNFDPADYSQEIDLSDVMNLTVITVNVEFAVSEAFQLFRTMGLRHMPVVNENNKLKGIITKKDLLEKTCEQRYRELNHMKLGIDQLIHVGDE.

Low complexity-rich tracts occupy residues 1-16 (MSSGNPFDNGNPNDGN) and 38-60 (NNNNNNNNNNNNNNNNNNNNSSV). The tract at residues 1–90 (MSSGNPFDNG…SYDDDGDDEE (90 aa)) is disordered. Residues 1-256 (MSSGNPFDNG…LASDHEVLRW (256 aa)) are Cytoplasmic-facing. Basic and acidic residues predominate over residues 71-80 (RIQEEERLTE). 10 consecutive transmembrane segments (helical) span residues 257–277 (IVSLFMGIFIGVIAYFSHACV), 290–310 (AVLELDLFLAFLTYFLLNTLL), 416–436 (GAGAGVAAAFSAPLGGTLFSL), 442–462 (FWSIALTWRAFFCCMVATYTM), 493–513 (IIPFLLIGVLGGLGGALFTWI), 534–554 (LEVFLIIGLSTCIQFFLPLFF), 678–698 (LGLWPMFLFCIFYLFFAAYTA), 710–730 (MLVIGASYGRFVGLVVYHILG), 733–753 (VSIDPGIYAVMGAAAFMGGVS), and 772–792 (YLLPLMLTVMTAKWVADALIH). 2 consecutive CBS domains span residues 824–881 (MAKK…ISDV) and 926–984 (MNLT…YREL).

Belongs to the chloride channel (TC 2.A.49) family.

The protein localises to the membrane. In terms of biological role, voltage-gated chloride channel. Chloride channels may have several functions including the regulation of cell volume, membrane potential stabilization and signal transduction. Required for normal aggregation. The polypeptide is Chloride channel protein D (clcD) (Dictyostelium discoideum (Social amoeba)).